The following is a 245-amino-acid chain: 1-(5-phosphoribosyl)-5-[(5-phosphoribosylamino)methylideneamino] imidazole-4-carboxamide isomerase (245 aa).

The Proton acceptor role is filled by Asp-7. Catalysis depends on Asp-129, which acts as the Proton donor.

The protein belongs to the HisA/HisF family.

It localises to the cytoplasm. The catalysed reaction is 1-(5-phospho-beta-D-ribosyl)-5-[(5-phospho-beta-D-ribosylamino)methylideneamino]imidazole-4-carboxamide = 5-[(5-phospho-1-deoxy-D-ribulos-1-ylimino)methylamino]-1-(5-phospho-beta-D-ribosyl)imidazole-4-carboxamide. It functions in the pathway amino-acid biosynthesis; L-histidine biosynthesis; L-histidine from 5-phospho-alpha-D-ribose 1-diphosphate: step 4/9. The sequence is that of 1-(5-phosphoribosyl)-5-[(5-phosphoribosylamino)methylideneamino] imidazole-4-carboxamide isomerase from Citrobacter koseri (strain ATCC BAA-895 / CDC 4225-83 / SGSC4696).